A 130-amino-acid polypeptide reads, in one-letter code: Small ribosomal subunit protein uS9 (130 aa).

The disordered stretch occupies residues 109 to 130; that stretch reads RAKERKKYGLYGARRSPQFTKR.

It belongs to the universal ribosomal protein uS9 family.

This is Small ribosomal subunit protein uS9 from Malacoplasma penetrans (strain HF-2) (Mycoplasma penetrans).